Here is a 259-residue protein sequence, read N- to C-terminus: Major cell-binding factor (259 aa).

Residues 1–26 (MVFRKSLLKLAVFALGACVAFSNANA) form the signal peptide.

It belongs to the bacterial solute-binding protein 3 family.

It localises to the cell surface. Its function is as follows. Common antigen and a major cell adherence molecule. Most probably involved, with PEB1C, in a binding-protein-dependent transport system for an amino acid. May be involved in binding to intestinal cells. The protein is Major cell-binding factor (peb1A) of Campylobacter jejuni subsp. jejuni serotype O:2 (strain ATCC 700819 / NCTC 11168).